The following is a 623-amino-acid chain: MHRYRSHTCGALSTAQVGEIVRLSGWCHRIRDHGGVLFIDLRDHYGLTQVVVDPDSAAFKDAEKVRAEWVIRIDGKVRLRPEGTENPDLATGAVEVYATELEVLGPSAELPLPVFGDVEYPEETRLRYRFLDLRREKLHRNIMTRGAIIDAMRSRMKGQGFFEFQTPILTASSPEGARDFLVPSRLHPGKFYALPQAPQQYKQLIMMSGFDRYFQIAPCFRDEDPRADRLPGEFYQLDLEMSFVEQEDIFAAVEPVITGVFEQFAEGKPVTQKWPRIPYAESLRKYGTDKPDLRNPLVMQNVSEHFRGSGFKVFARMLEVEKNEVWAIPAPGGGSRAFCDRMNSWAQSEGQPGLGYIMWRDLSADAAAGGEKAVKDALEKSRGPGAGEGHVVEPGVVGAGPLANNIGPERTEAIRAQLDLKAGDAAFFVAGDPDKFVKFAGLARTRVGEELNLVDKDRFELAWIVDFPFYEYSEEEKKVDFSHNPFSMPQGGLDALNTQDPLSIKAFQYDIACNGYEIASGGIRNHRPEAMVKAFEIAGYDAQTVEERFGGMYRAFQYGAPPHGGMAAGVDRIVMLLCGVTNLREISLFPMNQQALDLLMGAPAEAAPKQLRELHIRPAPQAK.

Glutamate 175 provides a ligand contact to L-aspartate. Positions 199 to 202 (QQYK) are aspartate. Residues arginine 221 and histidine 483 each coordinate L-aspartate. 221-223 (RDE) provides a ligand contact to ATP. Glutamate 517 contacts ATP. Arginine 524 lines the L-aspartate pocket. 569 to 572 (GVDR) is an ATP binding site.

The protein belongs to the class-II aminoacyl-tRNA synthetase family. Type 1 subfamily. In terms of assembly, homodimer.

It localises to the cytoplasm. It catalyses the reaction tRNA(Asx) + L-aspartate + ATP = L-aspartyl-tRNA(Asx) + AMP + diphosphate. Its function is as follows. Aspartyl-tRNA synthetase with relaxed tRNA specificity since it is able to aspartylate not only its cognate tRNA(Asp) but also tRNA(Asn). Reaction proceeds in two steps: L-aspartate is first activated by ATP to form Asp-AMP and then transferred to the acceptor end of tRNA(Asp/Asn). The chain is Aspartate--tRNA(Asp/Asn) ligase from Xanthobacter autotrophicus (strain ATCC BAA-1158 / Py2).